A 250-amino-acid polypeptide reads, in one-letter code: Ribosome-inactivating protein luffin-B (250 aa).

Glu-160 is a catalytic residue.

It belongs to the ribosome-inactivating protein family. Type 1 RIP subfamily.

It catalyses the reaction Endohydrolysis of the N-glycosidic bond at one specific adenosine on the 28S rRNA.. The sequence is that of Ribosome-inactivating protein luffin-B from Luffa aegyptiaca (Sponge gourd).